We begin with the raw amino-acid sequence, 173 residues long: Small ribosomal subunit protein uS5 (173 aa).

The S5 DRBM domain maps to 18–81 (LREKMIAVNR…EQARRGMFKV (64 aa)).

Belongs to the universal ribosomal protein uS5 family. Part of the 30S ribosomal subunit. Contacts proteins S4 and S8.

In terms of biological role, with S4 and S12 plays an important role in translational accuracy. Its function is as follows. Located at the back of the 30S subunit body where it stabilizes the conformation of the head with respect to the body. This is Small ribosomal subunit protein uS5 from Bordetella petrii (strain ATCC BAA-461 / DSM 12804 / CCUG 43448).